The following is a 147-amino-acid chain: Small ribosomal subunit protein bS6 (147 aa).

The disordered stretch occupies residues 107 to 147; that stretch reads KEGRERKARPARAERRDDTEAEDLSDEEGVEAEDFEEEQGV. The span at 125 to 147 shows a compositional bias: acidic residues; the sequence is TEAEDLSDEEGVEAEDFEEEQGV.

The protein belongs to the bacterial ribosomal protein bS6 family.

In terms of biological role, binds together with bS18 to 16S ribosomal RNA. The chain is Small ribosomal subunit protein bS6 from Cellvibrio japonicus (strain Ueda107) (Pseudomonas fluorescens subsp. cellulosa).